A 518-amino-acid polypeptide reads, in one-letter code: Glutamate--cysteine ligase (518 aa).

The protein belongs to the glutamate--cysteine ligase type 1 family. Type 1 subfamily.

The enzyme catalyses L-cysteine + L-glutamate + ATP = gamma-L-glutamyl-L-cysteine + ADP + phosphate + H(+). Its pathway is sulfur metabolism; glutathione biosynthesis; glutathione from L-cysteine and L-glutamate: step 1/2. In Citrobacter koseri (strain ATCC BAA-895 / CDC 4225-83 / SGSC4696), this protein is Glutamate--cysteine ligase.